A 169-amino-acid chain; its full sequence is Transcription antitermination protein NusB (169 aa).

The tract at residues 1 to 20 (MAESSNKPFRGPVRANDRKA) is disordered.

It belongs to the NusB family.

Functionally, involved in transcription antitermination. Required for transcription of ribosomal RNA (rRNA) genes. Binds specifically to the boxA antiterminator sequence of the ribosomal RNA (rrn) operons. The chain is Transcription antitermination protein NusB from Bradyrhizobium sp. (strain BTAi1 / ATCC BAA-1182).